A 319-amino-acid chain; its full sequence is Formimidoylglutamase (319 aa).

Residues histidine 131, aspartate 154, histidine 156, aspartate 158, cysteine 248, and aspartate 250 each contribute to the Mn(2+) site.

The protein belongs to the arginase family. It depends on Mn(2+) as a cofactor.

It carries out the reaction N-formimidoyl-L-glutamate + H2O = formamide + L-glutamate. The protein operates within amino-acid degradation; L-histidine degradation into L-glutamate; L-glutamate from N-formimidoyl-L-glutamate (hydrolase route): step 1/1. In terms of biological role, catalyzes the conversion of N-formimidoyl-L-glutamate to L-glutamate and formamide. The polypeptide is Formimidoylglutamase (Legionella pneumophila subsp. pneumophila (strain Philadelphia 1 / ATCC 33152 / DSM 7513)).